Here is a 946-residue protein sequence, read N- to C-terminus: Calcium-transporting ATPase type 2C member 2 (946 aa).

The Cytoplasmic segment spans residues 1 to 106 (MVEGRVSEFL…DNSEPVWKKY (106 aa)). The interaction with ORAI1 stretch occupies residues 71–95 (VDLHTGLSEFSVTQRRLAHGWNEFV). The chain crosses the membrane as a helical span at residues 107–127 (LDQFKNPLILLLLGSALVSVL). Topologically, residues 128–129 (TK) are extracellular. The helical transmembrane segment at 130–150 (EYEDAVSIATAVLVVVTVAFI) threads the bilayer. Over 151–231 (QEYRSEKSLE…EAEPCSKTDS (81 aa)) the chain is Cytoplasmic. The chain crosses the membrane as a helical span at residues 232-252 (PLTGGGDLTTLSNIVFMGTLV). The Extracellular portion of the chain corresponds to 253–293 (QYGRGQGVVIGTGESSQFGEVFKMMQAEETPKTPLQKSMDR). Residue Thr264 is modified to Phosphothreonine. A phosphoserine mark is found at Ser267 and Ser268. The chain crosses the membrane as a helical span at residues 294 to 314 (LGKQLTLFSFGIIGLIMLIGW). Residues 315–331 (SQGKQLLSMFTIGVSLA) are Cytoplasmic-facing. Ca(2+)-binding residues include Val332, Ala333, Ile335, and Glu337. The chain crosses the membrane as a helical span at residues 332–352 (VAAIPEGLPIVVMVTLVLGVL). The Extracellular segment spans residues 353-750 (RMAKKRVIVK…ISALSLITLS (398 aa)). Catalysis depends on Asp379, which acts as the 4-aspartylphosphate intermediate. Residues Asp674 and Asp678 each contribute to the Mg(2+) site. A helical membrane pass occupies residues 751 to 771 (TVFNLPSPLNAMQILWINIIM). Positions 768 and 772 each coordinate Ca(2+). The Cytoplasmic portion of the chain corresponds to 772 to 804 (DGPPAQSLGVEPVDKDAFRQPPRSVRDTILSRA). The chain crosses the membrane as a helical span at residues 805–825 (LILKILMSAAIIISGTLFIFW). The Extracellular portion of the chain corresponds to 826–837 (KEMPEDRASTPR). The chain crosses the membrane as a helical span at residues 838 to 855 (TTTMTFTCFVFFDLFNAL). At 856-874 (TCRSQTKLIFEIGFLRNHM) the chain is on the cytoplasmic side. Residues 875 to 895 (FLYSVLGSILGQLAVIYIPPL) traverse the membrane as a helical segment. The Extracellular segment spans residues 896-905 (QRVFQTENLG). A helical membrane pass occupies residues 906 to 926 (ALDLLFLTGLASSVFILSELL). Residues 927-946 (KLCEKYCCSPKRVQMHPEDV) lie on the Cytoplasmic side of the membrane.

The protein belongs to the cation transport ATPase (P-type) (TC 3.A.3) family. Type IIA subfamily. As to quaternary structure, interacts (via N-terminus) with ORAI1 (via N- and C-termini); this interaction regulates Ca(2+) influx at the plasma membrane. As to expression, highly expressed in the gastrointestinal and respiratory tracts, prostate, thyroid, salivary, and mammary glands. Expressed in colon epithelial cells (at protein level). Expressed in brain and testis (at protein level).

It localises to the golgi apparatus. The protein localises to the trans-Golgi network membrane. Its subcellular location is the cell membrane. It is found in the basolateral cell membrane. The enzyme catalyses Ca(2+)(in) + ATP + H2O = Ca(2+)(out) + ADP + phosphate + H(+). It carries out the reaction Mn(2+)(in) + ATP + H2O = Mn(2+)(out) + ADP + phosphate + H(+). Functionally, ATP-driven pump that supplies the Golgi apparatus with Ca(2+) and Mn(2+) ions, both essential cofactors for processing and trafficking of newly synthesized proteins in the secretory pathway. Within a catalytic cycle, acquires Ca(2+) or Mn(2+) ions on the cytoplasmic side of the membrane and delivers them to the lumenal side. The transfer of ions across the membrane is coupled to ATP hydrolysis and is associated with a transient phosphorylation that shifts the pump conformation from inward-facing to outward-facing state. Induces Ca(2+) influx independently of its ATP-driven pump function. At the basolateral membrane of mammary epithelial cells, interacts with Ca(2+) channel ORAI1 and mediates Ca(2+) entry independently of the Ca(2+) content of endoplasmic reticulum or Golgi stores. May facilitate transepithelial transport of large quantities of Ca(2+) for milk secretion via activation of Ca(2+) influx channels at the plasma membrane and active Ca(2+) transport at the Golgi apparatus. In Homo sapiens (Human), this protein is Calcium-transporting ATPase type 2C member 2.